A 398-amino-acid chain; its full sequence is Phosphoglycerate kinase (398 aa).

Substrate is bound by residues 23–25, Arg38, 61–64, Arg120, and Arg153; these read DLN and HFGR. ATP contacts are provided by residues Lys203, Glu325, and 355–358; that span reads GGDT.

The protein belongs to the phosphoglycerate kinase family. As to quaternary structure, monomer.

The protein resides in the cytoplasm. It carries out the reaction (2R)-3-phosphoglycerate + ATP = (2R)-3-phospho-glyceroyl phosphate + ADP. It functions in the pathway carbohydrate degradation; glycolysis; pyruvate from D-glyceraldehyde 3-phosphate: step 2/5. The sequence is that of Phosphoglycerate kinase from Mesorhizobium japonicum (strain LMG 29417 / CECT 9101 / MAFF 303099) (Mesorhizobium loti (strain MAFF 303099)).